The chain runs to 396 residues: MARAKFLREKLHVNVGTIGHVDHGKTTLTAALTKIGAERFGGEFKAYDAIDAAPEEKARGITISTAHVEYESAVRHYAHVDCPGHADYVKNMITGAAQMDGAILVCSAADGPMPQTREHILLSRQVGVPHIVVFLNKADMVDDAELLELVEMEVRELLSKYDFPGDDTPIIHGSARLALEGDQSDIGVPAILKLVEALDTFIPDPTRDVDRPFLMPVEDVFSISGRGTVVTGRIERGIIKVGDEIEIVGIRDTQKTTVTGVEMFRKLLDQGQAGDNAGLLLRGTKRDDVERGQVLCKPGSIKPHTEFEAEVYVLSKDEGGRHTPFFKGYRPQFYFRTTDITGACQLPEGVEMVMPGDNVKMVVTLINPVAMDEGLRFAIREGGRTVGAGVVAKIVK.

The 197-residue stretch at 10 to 206 folds into the tr-type G domain; sequence KLHVNVGTIG…ALDTFIPDPT (197 aa). A G1 region spans residues 19 to 26; it reads GHVDHGKT. A GTP-binding site is contributed by 19 to 26; that stretch reads GHVDHGKT. A Mg(2+)-binding site is contributed by Thr-26. The G2 stretch occupies residues 60-64; it reads GITIS. The interval 81 to 84 is G3; sequence DCPG. GTP contacts are provided by residues 81 to 85 and 136 to 139; these read DCPGH and NKAD. The interval 136-139 is G4; the sequence is NKAD. The G5 stretch occupies residues 174 to 176; the sequence is SAR.

It belongs to the TRAFAC class translation factor GTPase superfamily. Classic translation factor GTPase family. EF-Tu/EF-1A subfamily. In terms of assembly, monomer.

The protein resides in the cytoplasm. The catalysed reaction is GTP + H2O = GDP + phosphate + H(+). In terms of biological role, GTP hydrolase that promotes the GTP-dependent binding of aminoacyl-tRNA to the A-site of ribosomes during protein biosynthesis. This Xanthomonas campestris pv. campestris (strain ATCC 33913 / DSM 3586 / NCPPB 528 / LMG 568 / P 25) protein is Elongation factor Tu-B.